Consider the following 588-residue polypeptide: Protein decapentaplegic (588 aa).

An N-terminal signal peptide occupies residues 1 to 23 (MRAWLLLLAVLATFQTIVRVAST). The propeptide occupies 24–456 (EDISQRFIAA…DGRHKARSIR (433 aa)). The disordered stretch occupies residues 74-169 (FSEPASFSDS…STESHQSSSI (96 aa)). The segment covering 96-119 (SKSDANRQFNEVHKPRTDQLENSK) has biased composition (basic and acidic residues). A glycan (N-linked (GlcNAc...) asparagine) is linked at asparagine 120. Residues 140 to 153 (RSHHKKSHHHRSHQ) are compositionally biased toward basic residues. The span at 156-169 (QASASTESHQSSSI) shows a compositional bias: low complexity. Residues asparagine 342 and asparagine 377 are each glycosylated (N-linked (GlcNAc...) asparagine). The tract at residues 454–484 (SIRDVSGGEGGGKGGRNKRQPRRPTRRKNHD) is disordered. Basic residues predominate over residues 468-481 (GRNKRQPRRPTRRK). 3 cysteine pairs are disulfide-bonded: cysteine 487/cysteine 553, cysteine 516/cysteine 585, and cysteine 520/cysteine 587. Residue asparagine 529 is glycosylated (N-linked (GlcNAc...) asparagine).

This sequence belongs to the TGF-beta family. Heterodimers of scw/dpp are the active subunit, dpp/dpp homodimers elicit a basal response and scw/scw homodimers alone are ineffective in specifying a dorsal pattern. Component of a complex composed of dpp, sog and tsg. Interacts with nord and gbb; the interaction interferes with dpp secretion. In terms of tissue distribution, expressed in the dorsal region of the embryo, and becomes enriched in a dorsal midline stripe just prior to gastrulation. Expressed in midgut mesoderm and in two overlapping regions of the embryonic large intestine. Expressed in a long-range concentration gradient in the wing imaginal disk.

The protein resides in the secreted. In terms of biological role, required during oogenesis for eggshell patterning and dorsal/ventral patterning of the embryo. Acts as a morphogen during embryogenesis to pattern the dorsal/ventral axis, specifying dorsal ectoderm and amnioserosa cell fate within the dorsal half of the embryo; this activity is antagonized by binding to sog and tsg. Induces the formation of visceral mesoderm and the heart in early embryos. Required later in embryogenesis for dorsal closure and patterning of the hindgut. Also functions postembryonically as a long-range morphogen during imaginal disk development; is responsible for the progression of the morphogenetic furrow during eye development. Patterns the wing imaginal disk along its anterior/posterior axis and has a role in positioning pro-veins. Also required to subdivide the wing disk along the proximal/distal axis into body wall (notum) and wing. Ensures the correct architecture of wing epithelial cells. Has multiple roles in the developing tracheal system, controlling directed tracheal cell migration during embryogenesis and later specifying the fate of fusion cells in the tracheal branches. Required for viability of larvae. Essential for the maintenance and division of germline stem cells in the ovary. Signals via the type I receptor tkv, the type II receptor punt, and in some tissues via the type I receptor sax, in a signaling cascade that leads to activation and repression of target genes. This is Protein decapentaplegic (dpp) from Drosophila melanogaster (Fruit fly).